A 267-amino-acid polypeptide reads, in one-letter code: 4-hydroxy-tetrahydrodipicolinate reductase (267 aa).

NAD(+) contacts are provided by residues 8 to 13 (GIAGRM), Glu-34, 98 to 100 (GST), and 122 to 125 (SPNM). His-155 functions as the Proton donor/acceptor in the catalytic mechanism. His-156 serves as a coordination point for (S)-2,3,4,5-tetrahydrodipicolinate. Lys-159 (proton donor) is an active-site residue. 165 to 166 (GT) is a binding site for (S)-2,3,4,5-tetrahydrodipicolinate.

The protein belongs to the DapB family.

Its subcellular location is the cytoplasm. The enzyme catalyses (S)-2,3,4,5-tetrahydrodipicolinate + NAD(+) + H2O = (2S,4S)-4-hydroxy-2,3,4,5-tetrahydrodipicolinate + NADH + H(+). The catalysed reaction is (S)-2,3,4,5-tetrahydrodipicolinate + NADP(+) + H2O = (2S,4S)-4-hydroxy-2,3,4,5-tetrahydrodipicolinate + NADPH + H(+). It participates in amino-acid biosynthesis; L-lysine biosynthesis via DAP pathway; (S)-tetrahydrodipicolinate from L-aspartate: step 4/4. Catalyzes the conversion of 4-hydroxy-tetrahydrodipicolinate (HTPA) to tetrahydrodipicolinate. This is 4-hydroxy-tetrahydrodipicolinate reductase from Syntrophobacter fumaroxidans (strain DSM 10017 / MPOB).